The following is a 341-amino-acid chain: Anthranilate phosphoribosyltransferase (341 aa).

5-phospho-alpha-D-ribose 1-diphosphate-binding positions include Gly79, 82–83 (GD), Thr87, 89–92 (NIST), 107–115 (KHGNRAATS), and Ser119. Gly79 is a binding site for anthranilate. Ser91 is a Mg(2+) binding site. Residue Asn110 coordinates anthranilate. Position 165 (Arg165) interacts with anthranilate. Asp224 and Glu225 together coordinate Mg(2+).

It belongs to the anthranilate phosphoribosyltransferase family. As to quaternary structure, homodimer. The cofactor is Mg(2+).

It carries out the reaction N-(5-phospho-beta-D-ribosyl)anthranilate + diphosphate = 5-phospho-alpha-D-ribose 1-diphosphate + anthranilate. Its pathway is amino-acid biosynthesis; L-tryptophan biosynthesis; L-tryptophan from chorismate: step 2/5. Functionally, catalyzes the transfer of the phosphoribosyl group of 5-phosphorylribose-1-pyrophosphate (PRPP) to anthranilate to yield N-(5'-phosphoribosyl)-anthranilate (PRA). The protein is Anthranilate phosphoribosyltransferase of Symbiobacterium thermophilum (strain DSM 24528 / JCM 14929 / IAM 14863 / T).